The sequence spans 58 residues: Photosystem II reaction center protein K (58 aa).

Positions 1-21 are excised as a propeptide; the sequence is MLAIFNIYLDNAFHLNGIILA. Residues 29-49 traverse the membrane as a helical segment; the sequence is IFDPIVDVMPIIPVFFFLLAF.

This sequence belongs to the PsbK family. In terms of assembly, PSII is composed of 1 copy each of membrane proteins PsbA, PsbB, PsbC, PsbD, PsbE, PsbF, PsbH, PsbI, PsbJ, PsbK, PsbL, PsbM, PsbT, PsbX, PsbY, PsbZ, Psb30/Ycf12, at least 3 peripheral proteins of the oxygen-evolving complex and a large number of cofactors. It forms dimeric complexes.

It is found in the plastid. It localises to the chloroplast thylakoid membrane. Functionally, one of the components of the core complex of photosystem II (PSII). PSII is a light-driven water:plastoquinone oxidoreductase that uses light energy to abstract electrons from H(2)O, generating O(2) and a proton gradient subsequently used for ATP formation. It consists of a core antenna complex that captures photons, and an electron transfer chain that converts photonic excitation into a charge separation. The sequence is that of Photosystem II reaction center protein K from Physcomitrium patens (Spreading-leaved earth moss).